Consider the following 137-residue polypeptide: Small ribosomal subunit protein uS9c (137 aa).

This sequence belongs to the universal ribosomal protein uS9 family.

It localises to the plastid. It is found in the chloroplast. In Mesostigma viride (Green alga), this protein is Small ribosomal subunit protein uS9c (rps9).